Reading from the N-terminus, the 468-residue chain is Adenosylhomocysteinase (468 aa).

Substrate is bound by residues Thr-57, Asp-132, and Glu-194. Residue 195–197 (TTT) coordinates NAD(+). The substrate site is built by Lys-224 and Asp-228. Residues Asn-229, 258-263 (GFGDVG), Glu-281, Asn-316, 337-339 (IGH), and Asn-382 each bind NAD(+).

This sequence belongs to the adenosylhomocysteinase family. Requires NAD(+) as cofactor.

It is found in the cytoplasm. The enzyme catalyses S-adenosyl-L-homocysteine + H2O = L-homocysteine + adenosine. The protein operates within amino-acid biosynthesis; L-homocysteine biosynthesis; L-homocysteine from S-adenosyl-L-homocysteine: step 1/1. Functionally, may play a key role in the regulation of the intracellular concentration of adenosylhomocysteine. The protein is Adenosylhomocysteinase of Methylorubrum extorquens (strain CM4 / NCIMB 13688) (Methylobacterium extorquens).